Consider the following 137-residue polypeptide: Large ribosomal subunit protein eL28 (137 aa).

An N-acetylserine modification is found at serine 2. Glycyl lysine isopeptide (Lys-Gly) (interchain with G-Cter in SUMO2) cross-links involve residues lysine 58 and lysine 65. Serine 115 is modified (phosphoserine).

The protein belongs to the eukaryotic ribosomal protein eL28 family. Component of the large ribosomal subunit.

The protein resides in the cytoplasm. Functionally, component of the large ribosomal subunit. The ribosome is a large ribonucleoprotein complex responsible for the synthesis of proteins in the cell. This is Large ribosomal subunit protein eL28 (Rpl28) from Mus musculus (Mouse).